Consider the following 359-residue polypeptide: Cytohesin-interacting protein (359 aa).

The region spanning 77-166 (VVTVEKQDNG…LLTIETLNGT (90 aa)) is the PDZ domain. Residues 165–188 (GTMIHRRAELEAKLQTLKQTLKKK) adopt a coiled-coil conformation. Positions 166 to 188 (TMIHRRAELEAKLQTLKQTLKKK) are interaction with CYTH1.

As to quaternary structure, interacts with CYTH1 and SNX27.

It localises to the cytoplasm. The protein localises to the early endosome. In terms of biological role, by its binding to cytohesin-1 (CYTH1), it modifies activation of ARFs by CYTH1 and its precise function may be to sequester CYTH1 in the cytoplasm. This Mus musculus (Mouse) protein is Cytohesin-interacting protein (Cytip).